Here is a 130-residue protein sequence, read N- to C-terminus: Small ribosomal subunit protein uS9 (130 aa).

Belongs to the universal ribosomal protein uS9 family.

In Bacillus cytotoxicus (strain DSM 22905 / CIP 110041 / 391-98 / NVH 391-98), this protein is Small ribosomal subunit protein uS9.